Reading from the N-terminus, the 389-residue chain is Zinc finger C2HC domain-containing protein 1C homolog (389 aa).

2 disordered regions span residues 16-44 (MLPH…SQQS) and 84-115 (SYPH…GPQS). Composition is skewed to polar residues over residues 35–44 (YEQGDSSQQS) and 90–102 (GISQ…DSQG). A coiled-coil region spans residues 211–266 (VQIRRLEAAGESLEEEIRRKQILLRGKLKKTEEELRRIQMQKEQAKENENRELQKI). Disordered regions lie at residues 301 to 320 (REDE…QLSD) and 343 to 389 (SELS…PQLG). The span at 307 to 317 (GRSQQNSSPFQ) shows a compositional bias: polar residues. A compositionally biased stretch (low complexity) spans 368-382 (SSLSMAPDSSGSSGS).

This sequence belongs to the ZC2HC1 family.

The sequence is that of Zinc finger C2HC domain-containing protein 1C homolog (ZC2HC1C) from Pongo abelii (Sumatran orangutan).